Consider the following 932-residue polypeptide: MAVVIRLQGLPIVAGTMDIRHFFSGLTIPDGGVHIVGGELGEAFIVFATDEDARLGMMRTGGTIKGSKVTLLLSSKTEMQNMIELSRRRFETANLDIPPANASRSGPPPSSGMSGRVNLPTTVSNFNNPSPSVVTATTSVHESNKNIQTFSTASVGTAPPNMGASFGSPAFSSTVPSTASPMNTVPPPPIPPIPAMPSLPPMPSIPPIPVPPPVPTLPPVPPVPPIPPVPSVPPMTPLPPMSGMPPLNPPPVAPLPAGMNGSGAPMNLNNNLNPMFLGPLNPVNPIQMNSQSSVKPLPINPDDLYVSVHGMPFSAMENDVRDFFHGLRVDAVHLLKDHVGRNNGNGLVKFLSPQDTFEALKRNRMLMIQRYVEVSPATERQWVAAGGHITFKQNMGPSGQTHPPPQTLPRSKSPSGQKRSRSRSPHEAGFCVYLKGLPFEAENKHVIDFFKKLDIVEDSIYIAYGPNGKATGEGFVEFRNEADYKAALCRHKQYMGNRFIQVHPITKKGMLEKIDMIRKRLQNFSYDQREMILNPEGDVNSAKVCAHITNIPFSITKMDVLQFLEGIPVDENAVHVLVDNNGQGLGQALVQFKNEDDARKSERLHRKKLNGREAFVHVVTLEDMREIEKNPPAQGKKGLKMPVPGNPAVPGMPNAGLPGVGLPSAGLPGAGLPSTGLPGSAITSAGLPGAGMPSAGIPSAGGEEHAFLTVGSKEANNGPPFNFPGNFGGSNAFGPPIPPPGLGGGAFGDARPGMPSVGNSGLPGLGLDVPGFGGGPNNLSGPSGFGGGPQNFGNGPGSLGGPPGFGSGPPGLGSAPGHLGGPPAFGPGPGPGPGPGPGPIHIGGPPGFASSSGKPGPTVIKVQNMPFTVSIDEILDFFYGYQVIPGSVCLKYNEKGMPTGEAMVAFESRDEATAAVIDLNDRPIGSRKVNLY.

Residues 97 to 116 (IPPANASRSGPPPSSGMSGR) are disordered. Over residues 98 to 116 (PPANASRSGPPPSSGMSGR) the composition is skewed to low complexity. Residues 304–379 (LYVSVHGMPF…RYVEVSPATE (76 aa)) form the RRM 1 domain. A phosphoserine mark is found at S352 and S375. 2 stretches are compositionally biased toward polar residues: residues 392 to 401 (KQNMGPSGQT) and 408 to 417 (LPRSKSPSGQ). The interval 392-424 (KQNMGPSGQTHPPPQTLPRSKSPSGQKRSRSRS) is disordered. S420, S422, and S424 each carry phosphoserine. One can recognise an RRM 2 domain in the interval 430–507 (FCVYLKGLPF…RFIQVHPITK (78 aa)). At S525 the chain carries Phosphoserine. The span at 717 to 734 (NGPPFNFPGNFGGSNAFG) shows a compositional bias: low complexity. Residues 717–855 (NGPPFNFPGN…PGFASSSGKP (139 aa)) are disordered. A compositionally biased stretch (gly residues) spans 783-811 (SGFGGGPQNFGNGPGSLGGPPGFGSGPPG). Residues 824-838 (AFGPGPGPGPGPGPG) are compositionally biased toward pro residues. One can recognise an RRM 3 domain in the interval 856 to 932 (GPTVIKVQNM…PIGSRKVNLY (77 aa)).

The protein localises to the nucleus. The polypeptide is RNA-binding protein 12 (RBM12) (Pongo abelii (Sumatran orangutan)).